The chain runs to 122 residues: Large ribosomal subunit protein uL14 (122 aa).

The protein belongs to the universal ribosomal protein uL14 family. In terms of assembly, part of the 50S ribosomal subunit. Forms a cluster with proteins L3 and L19. In the 70S ribosome, L14 and L19 interact and together make contacts with the 16S rRNA in bridges B5 and B8.

Its function is as follows. Binds to 23S rRNA. Forms part of two intersubunit bridges in the 70S ribosome. The polypeptide is Large ribosomal subunit protein uL14 (Bifidobacterium animalis subsp. lactis (strain AD011)).